Here is a 269-residue protein sequence, read N- to C-terminus: Activator of basal transcription 1 (269 aa).

The tract at residues Met-1–Lys-40 is disordered. A coiled-coil region spans residues Gly-5–Glu-29. Acidic residues predominate over residues Glu-16 to Asp-32. The RRM domain maps to Gly-48–Leu-145. A coiled-coil region spans residues Ala-164–Gln-194. Residues Glu-220–Asp-244 form a disordered region.

It belongs to the ESF2/ABP1 family. Interacts with ESF1/ABTAP. Interacts with IGHMBP2. Ubiquitously expressed.

It localises to the nucleus. Its subcellular location is the nucleolus. Could be a novel TATA-binding protein (TBP) which can function as a basal transcription activator. Can act as a regulator of basal transcription for class II genes. The chain is Activator of basal transcription 1 (Abt1) from Mus musculus (Mouse).